A 600-amino-acid polypeptide reads, in one-letter code: Prostaglandin G/H synthase 1 (600 aa).

An N-terminal signal peptide occupies residues 1–24 (MSRQSISLRFPLLLLLLSPSPVFS). One can recognise an EGF-like domain in the interval 32-70 (PVNPCCYYPCQHQGICVRFGLDRYQCDCTRTGYSGPNCT). Disulfide bonds link Cys-36/Cys-47, Cys-37/Cys-159, Cys-41/Cys-57, and Cys-59/Cys-69. Asn-68 carries N-linked (GlcNAc...) asparagine glycosylation. The next 4 membrane-spanning stretches (helical) occupy residues 74 to 82 (IWTWLRTTL), 86 to 92 (PSFIHFL), 97 to 105 (RWLWDFVNA), and 108 to 122 (IRDT…VRSN). N-linked (GlcNAc...) asparagine glycosylation is present at Asn-144. His-207 (proton acceptor) is an active-site residue. The For cyclooxygenase activity role is filled by Tyr-385. His-388 lines the heme b pocket. N-linked (GlcNAc...) asparagine glycosylation occurs at Asn-410. Cysteines 569 and 575 form a disulfide.

Belongs to the prostaglandin G/H synthase family. In terms of assembly, homodimer. Heme b is required as a cofactor.

Its subcellular location is the endoplasmic reticulum membrane. It is found in the microsome membrane. The enzyme catalyses (5Z,8Z,11Z,14Z)-eicosatetraenoate + AH2 + 2 O2 = prostaglandin H2 + A + H2O. It catalyses the reaction (5Z,8Z,11Z,14Z)-eicosatetraenoate + 2 O2 = prostaglandin G2. The catalysed reaction is prostaglandin G2 + AH2 = prostaglandin H2 + A + H2O. It carries out the reaction (9Z,12Z)-octadecadienoate + AH2 + O2 = (9R)-hydroxy-(10E,12Z)-octadecadienoate + A + H2O. The enzyme catalyses (9Z,12Z)-octadecadienoate + AH2 + O2 = (9S)-hydroxy-(10E,12Z)-octadecadienoate + A + H2O. It catalyses the reaction (9Z,12Z)-octadecadienoate + AH2 + O2 = (13S)-hydroxy-(9Z,11E)-octadecadienoate + A + H2O. The catalysed reaction is (9Z,12Z)-octadecadienoate + AH2 + O2 = (13R)-hydroxy-(9Z,11E)-octadecadienoate + A + H2O. Its pathway is lipid metabolism; prostaglandin biosynthesis. Its activity is regulated as follows. The cyclooxygenase activity is inhibited by nonsteroidal anti-inflammatory drugs (NSAIDs) including ibuprofen, flurbiprofen, ketoprofen, naproxen, flurbiprofen, anirolac, fenclofenac and diclofenac. Dual cyclooxygenase and peroxidase that plays an important role in the biosynthesis pathway of prostanoids, a class of C20 oxylipins mainly derived from arachidonate ((5Z,8Z,11Z,14Z)-eicosatetraenoate, AA, C20:4(n-6)), with a particular role in the inflammatory response. The cyclooxygenase activity oxygenates AA to the hydroperoxy endoperoxide prostaglandin G2 (PGG2), and the peroxidase activity reduces PGG2 to the hydroxy endoperoxide prostaglandin H2 (PGH2), the precursor of all 2-series prostaglandins and thromboxanes. This complex transformation is initiated by abstraction of hydrogen at carbon 13 (with S-stereochemistry), followed by insertion of molecular O2 to form the endoperoxide bridge between carbon 9 and 11 that defines prostaglandins. The insertion of a second molecule of O2 (bis-oxygenase activity) yields a hydroperoxy group in PGG2 that is then reduced to PGH2 by two electrons. Involved in the constitutive production of prostanoids in particular in the stomach and platelets. In gastric epithelial cells, it is a key step in the generation of prostaglandins, such as prostaglandin E2 (PGE2), which plays an important role in cytoprotection. In platelets, it is involved in the generation of thromboxane A2 (TXA2), which promotes platelet activation and aggregation, vasoconstriction and proliferation of vascular smooth muscle cells. Can also use linoleate (LA, (9Z,12Z)-octadecadienoate, C18:2(n-6)) as substrate and produce hydroxyoctadecadienoates (HODEs) in a regio- and stereospecific manner, being (9R)-HODE ((9R)-hydroxy-(10E,12Z)-octadecadienoate) and (13S)-HODE ((13S)-hydroxy-(9Z,11E)-octadecadienoate) its major products. In Ovis aries (Sheep), this protein is Prostaglandin G/H synthase 1 (PTGS1).